The primary structure comprises 5430 residues: Microtubule-actin cross-linking factor 1 (5430 aa).

The segment at 1–47 is disordered; that stretch reads MSSSDEETLSERSCRSERSCRSERSYRSERSGSLSPCPPGDTLPWNL. Positions 1–295 are actin-binding; it reads MSSSDEETLS…VITYVSSIYD (295 aa). Ser4 bears the Phosphoserine mark. The segment covering 9-30 has biased composition (basic and acidic residues); the sequence is LSERSCRSERSCRSERSYRSER. Phosphoserine is present on residues Ser35 and Ser57. Calponin-homology (CH) domains lie at 78–181 and 194–298; these read RVQK…LHFQ and MSAK…DAFP. LRR repeat units lie at residues 148-171 and 240-264; these read QRQVKLVNIRNDDITDGNPKLTLG and LVDMERVQIQSNRENLEQAFEVAER. At Ser280 the chain carries Phosphoserine. 2 LRR repeats span residues 377–399 and 441–464; these read LYKLLEVWIEFGRIKLPQGYHPN and LNCEEKLTLAKNTLQADAAHLESG. The SH3 domain occupies 868-925; it reads KSTLSVKAICDYRQIEITICKNDECVLEDNSQRTKWKVISPTGNEAMVPSVCLLIPPP. The LRR 5 repeat unit spans residues 1050 to 1073; sequence ISELKNIRLRLEECEQRLLKQIQS. A Phosphoserine modification is found at Ser1122. LRR repeat units follow at residues 1128–1154, 1187–1210, and 1257–1282; these read ATTLRSELNLMVEKMDHVYGLSIVCLN, PADLSALESHRTTLQHWLSDVKDK, and HRVIAQLETRQSEVESIQEVLRDYRA. Ser1367 and Ser1376 each carry phosphoserine. LRR repeat units lie at residues 1579 to 1602 and 1629 to 1653; these read QQELSALQQNQSDLKDLQGDIQNH and LTALREKLYQAKEQYEGLQDRTREA. Spectrin repeat units follow at residues 1816–1891 and 1933–2041; these read ELQK…NFEE and QYQQ…ALLQ. Ser1860 carries the post-translational modification Phosphoserine. The LRR 11 repeat unit spans residues 1869–1891; it reads KGDLRFVTISGQKVLETENNFEE. LRR repeat units lie at residues 2058–2083 and 2194–2220; these read LQSMKEVEQNLEGEQVAALSSGLIQE and IQELTLEMEDQKENLGTLEHLVTALGS. The stretch at 2399-2507 is one Spectrin 3 repeat; sequence RMEEVQKEAS…TVARQKQLEE (109 aa). A phosphoserine mark is found at Ser2429 and Ser2454. LRR repeat units lie at residues 2444-2467, 2534-2557, and 2702-2725; these read KAFLAELEQNSPKIQKVKEALAGL, GVLGPLSIDPNMLNAQKQQVQFML, and KKRLETVALPLQGLEDLAADRMNR. Spectrin repeat units follow at residues 2733 to 2837 and 2842 to 2945; these read TQQF…SRLK and KAQK…SLEE. Phosphoserine is present on residues Ser2769 and Ser2895. LRR repeat units lie at residues 2984 to 3009, 3105 to 3127, and 3214 to 3237; these read NKNLEKLKAQREVLQALDPQVDYLRD, NKIQALRLDIEDSEAECRKMLEE, and KEQVDPLQVKLQQVNGLGQGLIQS. 13 Spectrin repeats span residues 3169–3274, 3281–3383, 3388–3491, 3714–3818, 3825–3927, 4047–4152, 4157–4261, 4267–4370, 4375–4481, 4486–4589, 4594–4700, 4707–4808, and 4812–4916; these read EDFY…QLQE, KFQD…QLED, AKQF…SLLE, RSQQ…ARLE, NQFW…ALDE, LAEK…KLED, AVQY…HKLE, LGQF…QQLQ, QAQG…KLEE, ATEF…RSLD, RAKQ…KLEE, QFMD…RLEQ, and QAEE…QRLE. Thr3368 bears the Phosphothreonine mark. LRR repeat units lie at residues 3737-3761 and 3846-3870; these read MALGPIRLEQDQTTAQLQVQKAFSI and AQLPPPAVDHEQLRQQQEEMRQLRE. The residue at position 4074 (Ser4074) is a Phosphoserine. Lys4252 bears the N6-acetyllysine mark. One copy of the LRR 22 repeat lies at 4538–4561; it reads RDQIIELDQTGNQLKFLSQKQDVV. The interval 4993–5023 is disordered; it reads PTHAPFIEKSRSGSRKSLNQPTPPPMPILSQ. A Phosphoserine modification is found at Ser5009. EF-hand domains follow at residues 5083–5118 and 5119–5154; these read HKKSRVMDFFRRIDKDQDGKITRQEFIDGILASKFP and TTKLEMTAVADIFDRDGDGYIDYYEFVAALHPNKDA. Ca(2+) is bound by residues Asp5096, Asp5098, Asp5100, Lys5102, Glu5107, Asp5132, Asp5134, Asp5136, Tyr5138, and Glu5143. A GAR domain is found at 5159–5231; the sequence is TDADKIEDEV…EFLVKNDPCR (73 aa). Residues 5159–5430 are C-terminal tail; the sequence is TDADKIEDEV…ASPRTPCPKR (272 aa). A disordered region spans residues 5247–5430; it reads PEGASQGMTP…ASPRTPCPKR (184 aa). Over residues 5267-5301 the composition is skewed to low complexity; it reads SSRAASPTRSSSSASQSNHSCTSMPSSPATPASGT. Thr5296 is subject to Phosphothreonine. Over residues 5317-5341 the composition is skewed to polar residues; the sequence is TFHSSRTSLAGDTSNSSSPASTGAK. Ser5321 and Ser5334 each carry phosphoserine. The span at 5352–5366 shows a compositional bias: low complexity; it reads SRPGSRAGSRAGSRA. The segment at 5355–5370 is 4 X 4 AA tandem repeats of [GS]-S-R-[AR]; that stretch reads GSRAGSRAGSRASSRR. Residues Ser5372 and Ser5375 each carry the phosphoserine modification. Residues 5381–5391 are compositionally biased toward polar residues; that stretch reads ETQSACSDTSE. The segment covering 5392 to 5403 has biased composition (low complexity); it reads SSAAGGQGSSRR.

The protein belongs to the plakin or cytolinker family. As to quaternary structure, interacts with MAPRE1, CLASP1, CLASP2 and GOLGA4. Interacts with AXIN1 and LRP6. Found in a complex composed of MACF1, APC; AXIN1, CTNNB1 and GSK3B. Interacts with CAMSAP3. Phosphorylated on serine residues in the C-terminal tail by GSK3B. Phosphorylation inhibits microtubule-binding and this plays a critical role in bulge stem cell migration and skin wound repair. Wnt-signaling can repress phosphorylation.

Its subcellular location is the cytoplasm. It localises to the cytoskeleton. The protein localises to the golgi apparatus. The protein resides in the cell membrane. It is found in the cell projection. Its subcellular location is the ruffle membrane. It localises to the membrane. Its function is as follows. F-actin-binding protein which plays a role in cross-linking actin to other cytoskeletal proteins and also binds to microtubules. Plays an important role in ERBB2-dependent stabilization of microtubules at the cell cortex. Acts as a positive regulator of Wnt receptor signaling pathway and is involved in the translocation of AXIN1 and its associated complex (composed of APC, CTNNB1 and GSK3B) from the cytoplasm to the cell membrane. Has actin-regulated ATPase activity and is essential for controlling focal adhesions (FAs) assembly and dynamics. Interaction with CAMSAP3 at the minus ends of non-centrosomal microtubules tethers microtubules minus-ends to actin filaments, regulating focal adhesion size and cell migration. May play role in delivery of transport vesicles containing GPI-linked proteins from the trans-Golgi network through its interaction with GOLGA4. Plays a key role in wound healing and epidermal cell migration. Required for efficient upward migration of bulge cells in response to wounding and this function is primarily rooted in its ability to coordinate microtubule dynamics and polarize hair follicle stem cells. As a regulator of actin and microtubule arrangement and stabilization, it plays an essential role in neurite outgrowth, branching and spine formation during brain development. The protein is Microtubule-actin cross-linking factor 1 of Rattus norvegicus (Rat).